The sequence spans 102 residues: Small ribosomal subunit protein uS10 (102 aa).

It belongs to the universal ribosomal protein uS10 family. In terms of assembly, part of the 30S ribosomal subunit.

In terms of biological role, involved in the binding of tRNA to the ribosomes. The polypeptide is Small ribosomal subunit protein uS10 (Shouchella clausii (strain KSM-K16) (Alkalihalobacillus clausii)).